A 90-amino-acid chain; its full sequence is MMKQQFFLFLAVIVMISSVIEAGRGKEIMKNIKEKLTEVKDKMKHSWNKLTSMSEYACPVIEKWCEDHCAAKKAIGKCEDTECKCLKLRK.

The N-terminal stretch at 1–22 (MMKQQFFLFLAVIVMISSVIEA) is a signal peptide. Positions 23 to 29 (GRGKEIM) are excised as a propeptide. One can recognise a BetaSPN-type CS-alpha/beta domain in the interval 55 to 90 (EYACPVIEKWCEDHCAAKKAIGKCEDTECKCLKLRK). 3 disulfides stabilise this stretch: C58-C78, C65-C83, and C69-C85.

Belongs to the long chain scorpion toxin family. Class 2 subfamily. As to expression, expressed by the venom gland.

It is found in the secreted. Functionally, this recombinant peptide reversibly and dose-dependently inhibits the transient outward potassium current (I(To)) of rabbit atrial myocyte and prolongs the action potential duration of rabbit atrial myocyte without affecting the action potential amplitude. Thus, the voltage-gated potassium channels Kv4.1/KCND1, Kv4.2/KCND2, Kv4.3/KCND3 may be the target of this toxin. The chain is Potassium channel toxin BmTXK-beta from Olivierus martensii (Manchurian scorpion).